The chain runs to 574 residues: DNA polymerase I (574 aa).

The 158-residue stretch at 4–161 (EYVTGEEGLK…ELFPKMRDML (158 aa)) folds into the 3'-5' exonuclease domain.

The protein belongs to the DNA polymerase type-A family.

The catalysed reaction is DNA(n) + a 2'-deoxyribonucleoside 5'-triphosphate = DNA(n+1) + diphosphate. The polypeptide is DNA polymerase I (polA) (Aquifex aeolicus (strain VF5)).